We begin with the raw amino-acid sequence, 321 residues long: 1D-myo-inositol 2-acetamido-2-deoxy-alpha-D-glucopyranoside deacetylase (321 aa).

Zn(2+) is bound by residues His-15, Asp-18, and His-150. Residues 280-321 are disordered; the sequence is PEGERESDLFAGLPPATDGTGAAGAPSATGAANPADAEGGAA. Residues 290-321 show a composition bias toward low complexity; it reads AGLPPATDGTGAAGAPSATGAANPADAEGGAA.

It belongs to the MshB deacetylase family. The cofactor is Zn(2+).

It carries out the reaction 1D-myo-inositol 2-acetamido-2-deoxy-alpha-D-glucopyranoside + H2O = 1D-myo-inositol 2-amino-2-deoxy-alpha-D-glucopyranoside + acetate. Its function is as follows. Catalyzes the deacetylation of 1D-myo-inositol 2-acetamido-2-deoxy-alpha-D-glucopyranoside (GlcNAc-Ins) in the mycothiol biosynthesis pathway. The chain is 1D-myo-inositol 2-acetamido-2-deoxy-alpha-D-glucopyranoside deacetylase from Streptomyces griseus subsp. griseus (strain JCM 4626 / CBS 651.72 / NBRC 13350 / KCC S-0626 / ISP 5235).